A 4690-amino-acid polypeptide reads, in one-letter code: Nonribosomal peptide synthetase sidN (4690 aa).

Residues 238-656 (ARVRENPGRI…LGRLSSDQIK (419 aa)) form an adenylation 1 region. The 78-residue stretch at 779–856 (SSSIPMLQSV…DLDTKAQQAL (78 aa)) folds into the Carrier 1 domain. The residue at position 816 (S816) is an O-(pantetheine 4'-phosphoryl)serine. The segment at 924–1175 (APGGKAFIQH…AFGNTMSDRF (252 aa)) is condensation 1. Positions 1349-1760 (EFAQKSPNAI…GRKDDLVKIR (412 aa)) are adenylation 2. The Carrier 2 domain maps to 1889-1965 (PAWCIKHRPL…DLINHLSVKR (77 aa)). S1926 bears the O-(pantetheine 4'-phosphoryl)serine mark. Residues 2001-2285 (PTTVFQDGML…SERLLESQLV (285 aa)) are condensation 2. The adenylation 3 stretch occupies residues 2464 to 2869 (TWAKTHPEWK…GRKDEQVKVR (406 aa)). In terms of domain architecture, Carrier 3 spans 3002-3079 (RDLTSIEKQI…ELGRMKNALK (78 aa)). O-(pantetheine 4'-phosphoryl)serine is present on S3040. Positions 3121-3530 (CMPLQEVLVA…QMESLVTSFT (410 aa)) are condensation 3. In terms of domain architecture, Carrier 4 spans 3564 to 3637 (SVLEQQIRDV…KLATHIQTTS (74 aa)). O-(pantetheine 4'-phosphoryl)serine is present on S3598. The tract at residues 3679-4087 (VYPLTPLQAG…FESIRKHPDE (409 aa)) is condensation 4. Residues 4119 to 4195 (SAIDQFLDPL…KLCEVAFAKS (77 aa)) form the Carrier 5 domain. S4156 carries the post-translational modification O-(pantetheine 4'-phosphoryl)serine. Positions 4262 to 4589 (WVFKAENGLD…FNAHLNILWN (328 aa)) are condensation 5.

Belongs to the NRP synthetase family.

The protein operates within siderophore biosynthesis. Functionally, nonribosomal peptide synthetase required for the biosynthetis of epichloenin A, an extracellular siderophore that plays a crucial role in endophyte-grass symbioses. SidN assembles epichloenin A by activating and incorporating three trans-anhydromevalonylhydroxyornithine (trans-AMHO), 1 glutamine and 4 glycine moieties. Trans-AMHO is produced from L-ornithine via 2 steps involving a L-ornithine N(5)-monooxygenase and an AHMO-N(5)-transacylase that have still to be identified. The third adenylation domain (A3) of sidN incorporates the hydroxamate groups of the siderophore which forms an octahedral iron complex. The other component amino acids are assembled by sidN adenylation domains A1 and A2. The protein is Nonribosomal peptide synthetase sidN of Epichloe festucae (strain Fl1).